The sequence spans 439 residues: Probable guanine deaminase (439 aa).

Zn(2+) is bound by residues His76 and His78. Residues 78 to 81 (HYPQ), 203 to 204 (RF), 231 to 234 (HINE), and Asp321 each bind substrate. 2 residues coordinate Zn(2+): His231 and Asp321.

Belongs to the metallo-dependent hydrolases superfamily. ATZ/TRZ family. It depends on Zn(2+) as a cofactor.

The catalysed reaction is guanine + H2O + H(+) = xanthine + NH4(+). It functions in the pathway purine metabolism; guanine degradation; xanthine from guanine: step 1/1. Catalyzes the hydrolytic deamination of guanine, producing xanthine and ammonia. This is Probable guanine deaminase (guaD) from Deinococcus radiodurans (strain ATCC 13939 / DSM 20539 / JCM 16871 / CCUG 27074 / LMG 4051 / NBRC 15346 / NCIMB 9279 / VKM B-1422 / R1).